We begin with the raw amino-acid sequence, 379 residues long: Succinate--CoA ligase [ADP-forming] subunit beta (379 aa).

Residues 9 to 235 (KEIAKNNGIP…GRELSEMEAI (227 aa)) form the ATP-grasp domain. ATP contacts are provided by Lys-45, Glu-91, Ile-94, and Glu-99. The Mg(2+) site is built by Asn-191 and Asp-205. Residues Asn-255 and 312 to 314 (GIT) contribute to the substrate site.

The protein belongs to the succinate/malate CoA ligase beta subunit family. In terms of assembly, heterotetramer of two alpha and two beta subunits. The cofactor is Mg(2+).

It catalyses the reaction succinate + ATP + CoA = succinyl-CoA + ADP + phosphate. The catalysed reaction is GTP + succinate + CoA = succinyl-CoA + GDP + phosphate. Its pathway is carbohydrate metabolism; tricarboxylic acid cycle; succinate from succinyl-CoA (ligase route): step 1/1. Its function is as follows. Succinyl-CoA synthetase functions in the citric acid cycle (TCA), coupling the hydrolysis of succinyl-CoA to the synthesis of either ATP or GTP and thus represents the only step of substrate-level phosphorylation in the TCA. The beta subunit provides nucleotide specificity of the enzyme and binds the substrate succinate, while the binding sites for coenzyme A and phosphate are found in the alpha subunit. The protein is Succinate--CoA ligase [ADP-forming] subunit beta of Staphylothermus marinus (strain ATCC 43588 / DSM 3639 / JCM 9404 / F1).